Here is a 137-residue protein sequence, read N- to C-terminus: Endoribonuclease YbeY (137 aa).

The Zn(2+) site is built by H103, H107, and H113.

It belongs to the endoribonuclease YbeY family. Zn(2+) is required as a cofactor.

Its subcellular location is the cytoplasm. Functionally, single strand-specific metallo-endoribonuclease involved in late-stage 70S ribosome quality control and in maturation of the 3' terminus of the 16S rRNA. This is Endoribonuclease YbeY from Acholeplasma laidlawii (strain PG-8A).